Reading from the N-terminus, the 173-residue chain is Crossover junction endodeoxyribonuclease RuvC (173 aa).

Catalysis depends on residues Asp-8, Glu-67, and Asp-139. The Mg(2+) site is built by Asp-8, Glu-67, and Asp-139.

Belongs to the RuvC family. Homodimer which binds Holliday junction (HJ) DNA. The HJ becomes 2-fold symmetrical on binding to RuvC with unstacked arms; it has a different conformation from HJ DNA in complex with RuvA. In the full resolvosome a probable DNA-RuvA(4)-RuvB(12)-RuvC(2) complex forms which resolves the HJ. Requires Mg(2+) as cofactor.

It is found in the cytoplasm. The enzyme catalyses Endonucleolytic cleavage at a junction such as a reciprocal single-stranded crossover between two homologous DNA duplexes (Holliday junction).. The RuvA-RuvB-RuvC complex processes Holliday junction (HJ) DNA during genetic recombination and DNA repair. Endonuclease that resolves HJ intermediates. Cleaves cruciform DNA by making single-stranded nicks across the HJ at symmetrical positions within the homologous arms, yielding a 5'-phosphate and a 3'-hydroxyl group; requires a central core of homology in the junction. The consensus cleavage sequence is 5'-(A/T)TT(C/G)-3'. Cleavage occurs on the 3'-side of the TT dinucleotide at the point of strand exchange. HJ branch migration catalyzed by RuvA-RuvB allows RuvC to scan DNA until it finds its consensus sequence, where it cleaves and resolves the cruciform DNA. In Shewanella baltica (strain OS223), this protein is Crossover junction endodeoxyribonuclease RuvC.